Here is a 153-residue protein sequence, read N- to C-terminus: D-aminoacyl-tRNA deacylase (153 aa).

Positions 137 to 138 match the Gly-cisPro motif, important for rejection of L-amino acids motif; sequence GP.

It belongs to the DTD family. In terms of assembly, homodimer.

The protein localises to the cytoplasm. The enzyme catalyses glycyl-tRNA(Ala) + H2O = tRNA(Ala) + glycine + H(+). It carries out the reaction a D-aminoacyl-tRNA + H2O = a tRNA + a D-alpha-amino acid + H(+). Its function is as follows. An aminoacyl-tRNA editing enzyme that deacylates mischarged D-aminoacyl-tRNAs. Also deacylates mischarged glycyl-tRNA(Ala), protecting cells against glycine mischarging by AlaRS. Acts via tRNA-based rather than protein-based catalysis; rejects L-amino acids rather than detecting D-amino acids in the active site. By recycling D-aminoacyl-tRNA to D-amino acids and free tRNA molecules, this enzyme counteracts the toxicity associated with the formation of D-aminoacyl-tRNA entities in vivo and helps enforce protein L-homochirality. In Myxococcus xanthus (strain DK1622), this protein is D-aminoacyl-tRNA deacylase.